The sequence spans 216 residues: Transmembrane emp24 domain-containing protein eca (216 aa).

An N-terminal signal peptide occupies residues 1–20 (MRDQWICLALVLCALHSACG). At 21–183 (LYFHISETER…RHTSESTNSR (163 aa)) the chain is on the lumenal side. Residues 30–126 (RKCFIEEVPD…QLRVHLDIQV (97 aa)) form the GOLD domain. Residues 134–164 (ANVAQKEKLTELQLRIRQLLDQVEQITKEQN) are a coiled coil. Residues 184–203 (VLWWSLAQTVVLVCMGFWQM) form a helical membrane-spanning segment. The Cytoplasmic segment spans residues 204–216 (RHLKSFFEAKKLV). Residues 213 to 216 (KKLV) carry the Prevents secretion from ER motif.

The protein belongs to the EMP24/GP25L family.

The protein localises to the endoplasmic reticulum membrane. Eca and bai are essential, though not redundant, for dorsoventral patterning of the embryo. Specifically required during early embryogenesis for the activity of maternal tkv, while the zygotic tkv is not affected. This chain is Transmembrane emp24 domain-containing protein eca, found in Drosophila mojavensis (Fruit fly).